The chain runs to 49 residues: MDKEAKVKSTGERGIIEAIYPETETVELCYYDGTYDERRFDDVVMATSS.

The polypeptide is SPbeta prophage-derived uncharacterized protein YorN (yorN) (Bacillus subtilis (strain 168)).